The chain runs to 1622 residues: WD repeat-containing protein 97 (1622 aa).

6 WD repeats span residues 187 to 233, 290 to 329, 331 to 370, 552 to 592, 594 to 633, and 687 to 726; these read SEQG…RRLV, LHKTTISDLAYCEEVEAMVTASRDSTVKVWEADWQIRMVF, GHTGPVTAMTVLPNTTLVLSASQDGTLRTWDLQAAAQVGE, ELRC…TVFQ, EAHSPGPVVAIASTWNSIVSSGGDLTVKMWRVFPYAEESL, and DPTDHITGLCCCPTLKLYACSSLDCTVRIWTAENRLLRLL. Disordered stretches follow at residues 1090-1112 and 1453-1472; these read GEKPGEEGEEDKKEEEEEKEDEE and LHPAGPAQLPGEPPPLEETD. A coiled-coil region spans residues 1094-1118; sequence GEEGEEDKKEEEEEKEDEELDWALA. Residues 1096–1112 are compositionally biased toward acidic residues; the sequence is EGEEDKKEEEEEKEDEE.

The sequence is that of WD repeat-containing protein 97 from Homo sapiens (Human).